The following is a 1789-amino-acid chain: Protein TIC 214 (1789 aa).

6 helical membrane-spanning segments follow: residues I19–G39, F68–L88, P91–H111, V133–L153, V176–I196, and I227–I247.

It belongs to the TIC214 family. Part of the Tic complex.

The protein resides in the plastid. The protein localises to the chloroplast inner membrane. Its function is as follows. Involved in protein precursor import into chloroplasts. May be part of an intermediate translocation complex acting as a protein-conducting channel at the inner envelope. The protein is Protein TIC 214 of Capsella bursa-pastoris (Shepherd's purse).